Reading from the N-terminus, the 384-residue chain is Urea transporter 1 (384 aa).

The segment at 1-23 (MDDNPTAVKLDQGGNQAPQGQGR) is disordered. The next 5 membrane-spanning stretches (helical) occupy residues 61–81 (ISQV…VGLL), 85–105 (PWCA…ALLL), 111–131 (AITA…MAIY), 138–158 (FWWL…FSSA), and 169–189 (PVFT…TGHF). A glycan (N-linked (GlcNAc...) asparagine) is linked at Asn206. Helical transmembrane passes span 237–257 (GGIF…HAAI), 279–299 (GLWG…FMAL), and 327–347 (VVGL…FLLL).

It belongs to the urea transporter family. As to quaternary structure, homotrimer; each subunit contains a pore through which urea permeates. Identified in a complex with STOM.

The protein localises to the cell membrane. Its subcellular location is the basolateral cell membrane. The catalysed reaction is urea(in) = urea(out). Its function is as follows. Mediates the transport of urea driven by a concentration gradient across the cell membranes of erythrocytes and the renal inner medullary collecting duct which is critical to the urinary concentrating mechanism. Facilitates water transport in erythrocytes. This is Urea transporter 1 (SLC14A1) from Ovis aries (Sheep).